A 62-amino-acid polypeptide reads, in one-letter code: Large ribosomal subunit protein bL28 (62 aa).

This sequence belongs to the bacterial ribosomal protein bL28 family.

This chain is Large ribosomal subunit protein bL28, found in Desulforamulus reducens (strain ATCC BAA-1160 / DSM 100696 / MI-1) (Desulfotomaculum reducens).